A 401-amino-acid polypeptide reads, in one-letter code: Imidazolonepropionase (401 aa).

Residues His-66 and His-68 each contribute to the Fe(3+) site. 2 residues coordinate Zn(2+): His-66 and His-68. 4-imidazolone-5-propanoate is bound by residues Arg-75, Tyr-138, and His-171. Tyr-138 is an N-formimidoyl-L-glutamate binding site. His-236 is a binding site for Fe(3+). His-236 provides a ligand contact to Zn(2+). A 4-imidazolone-5-propanoate-binding site is contributed by Gln-239. Asp-311 is a binding site for Fe(3+). Residue Asp-311 participates in Zn(2+) binding. Asn-313 and Gly-315 together coordinate N-formimidoyl-L-glutamate. A 4-imidazolone-5-propanoate-binding site is contributed by Thr-316.

Belongs to the metallo-dependent hydrolases superfamily. HutI family. It depends on Zn(2+) as a cofactor. Fe(3+) is required as a cofactor.

It is found in the cytoplasm. The enzyme catalyses 4-imidazolone-5-propanoate + H2O = N-formimidoyl-L-glutamate. It participates in amino-acid degradation; L-histidine degradation into L-glutamate; N-formimidoyl-L-glutamate from L-histidine: step 3/3. Catalyzes the hydrolytic cleavage of the carbon-nitrogen bond in imidazolone-5-propanoate to yield N-formimidoyl-L-glutamate. It is the third step in the universal histidine degradation pathway. This is Imidazolonepropionase from Pseudomonas fluorescens (strain Pf0-1).